The primary structure comprises 122 residues: Double-headed protease inhibitor, submandibular gland (122 aa).

Kazal-like domains follow at residues 10–70 (GGRK…NCDI) and 71–121 (ECTQ…QCES). Disulfide bonds link Cys16/Cys50, Cys28/Cys47, Cys36/Cys68, Cys72/Cys101, Cys79/Cys98, and Cys87/Cys119.

The protein localises to the secreted. Its function is as follows. This inhibitor is composed of two homologous actively inhibiting halves: one which inhibits trypsin, the other which inhibits elastase. This chain is Double-headed protease inhibitor, submandibular gland, found in Meles meles (Eurasian badger).